Consider the following 391-residue polypeptide: DNA-directed RNA polymerase subunit Rpo1C (391 aa).

The protein belongs to the RNA polymerase beta' chain family. In terms of assembly, part of the RNA polymerase complex.

Its subcellular location is the cytoplasm. The enzyme catalyses RNA(n) + a ribonucleoside 5'-triphosphate = RNA(n+1) + diphosphate. In terms of biological role, DNA-dependent RNA polymerase (RNAP) catalyzes the transcription of DNA into RNA using the four ribonucleoside triphosphates as substrates. Forms part of the jaw domain. This chain is DNA-directed RNA polymerase subunit Rpo1C, found in Thermococcus onnurineus (strain NA1).